Consider the following 594-residue polypeptide: Arginine--tRNA ligase (594 aa).

Residues 139 to 149 (ANPTGPLHVGH) carry the 'HIGH' region motif.

It belongs to the class-I aminoacyl-tRNA synthetase family. In terms of assembly, monomer.

It localises to the cytoplasm. It carries out the reaction tRNA(Arg) + L-arginine + ATP = L-arginyl-tRNA(Arg) + AMP + diphosphate. This Burkholderia thailandensis (strain ATCC 700388 / DSM 13276 / CCUG 48851 / CIP 106301 / E264) protein is Arginine--tRNA ligase.